The sequence spans 127 residues: Large ribosomal subunit protein bL21 (127 aa).

It belongs to the bacterial ribosomal protein bL21 family. In terms of assembly, part of the 50S ribosomal subunit. Contacts protein L20.

In terms of biological role, this protein binds to 23S rRNA in the presence of protein L20. This Synechococcus sp. (strain ATCC 27144 / PCC 6301 / SAUG 1402/1) (Anacystis nidulans) protein is Large ribosomal subunit protein bL21.